The chain runs to 211 residues: Transcription factor ces-2 (211 aa).

Residues 83–101 (VSSRSSTVSSSHFSSPQRS) are compositionally biased toward low complexity. 2 disordered regions span residues 83-152 (VSSR…HALE) and 184-211 (NSEV…TIEV). Basic and acidic residues predominate over residues 111-152 (PEEKKDSAYFERRRKNNDAAKRSRDARRQKEEQIASKAHALE). Residues 116–179 (DSAYFERRRK…AQLRFLLFSK (64 aa)) form the bZIP domain. The basic motif stretch occupies residues 122 to 140 (RRRKNNDAAKRSRDARRQK). The segment at 144–172 (IASKAHALERENMQLRGKVSSLEQEAAQL) is leucine-zipper. Residues 190–200 (ESNDSTETNDS) are compositionally biased toward low complexity. Over residues 201–211 (NDSKSDSTIEV) the composition is skewed to basic and acidic residues.

The protein belongs to the bZIP family. As to quaternary structure, interacts with NFIL3 transcription factor homolog atf-2.

Its subcellular location is the nucleus. Its function is as follows. Transcription factor. Required to activate programmed cell death in the sister cells of the serotoninergic neurosecretory motor (NSM) neurons. Negatively regulates the activity of ces-1 which in turn negatively regulates the activities of cell-killing genes. Binds to the DNA sequence 5'-RTTACGTAAY-3'. Involved in the development of the excretory duct cell, by positively modulating embryonic transcription of putative transcription factor lin-48, acting in concert with NFIL3 transcription factor homolog atf-2. Positively modulates expression of neuropeptide pigment dispersing factor homologs pdf-1 and pdf-2. The protein is Transcription factor ces-2 (ces-2) of Caenorhabditis elegans.